Consider the following 278-residue polypeptide: Soluble NSF attachment protein homolog FPV011 (278 aa).

This sequence belongs to the SNAP family.

This Fowlpox virus (strain NVSL) (FPV) protein is Soluble NSF attachment protein homolog FPV011.